The sequence spans 80 residues: Serine protease inhibitor Kazal-type 6 (80 aa).

An N-terminal signal peptide occupies residues 1 to 23 (MKTSGVFLLLSLALFCFFSGVFG). Position 24 is a pyrrolidone carboxylic acid (Gln24). Residues 24–80 (QGAQVDCAEFKDPKVYCTRESNPHCGSDGQTYGNKCAFCKAVMKSGGKINLKHRGKC) form the Kazal-like domain. 3 disulfides stabilise this stretch: Cys30–Cys62, Cys40–Cys59, and Cys48–Cys80.

In terms of tissue distribution, seminal plasma.

It localises to the secreted. Serine protease inhibitor selective for kallikreins. Efficiently inhibits KLK4, KLK5, KLK6, KLK7, KLK12, KLK13 and KLK14. Doesn't inhibit KLK8. Inhibits acrosin, trypsin, and chymotrypsin. This chain is Serine protease inhibitor Kazal-type 6 (SPINK6), found in Bos taurus (Bovine).